The sequence spans 526 residues: GMP synthase [glutamine-hydrolyzing] (526 aa).

The Glutamine amidotransferase type-1 domain maps to 4–204; that stretch reads KIVVLDFGSQ…AHAICGCSGD (201 aa). The active-site Nucleophile is the Cys-87. Residues His-178 and Glu-180 contribute to the active site. In terms of domain architecture, GMPS ATP-PPase spans 205-401; it reads WTPASFVEEQ…LDVPDPIVGR (197 aa). Residue 232–238 participates in ATP binding; it reads SGGVDSS.

As to quaternary structure, homodimer.

The enzyme catalyses XMP + L-glutamine + ATP + H2O = GMP + L-glutamate + AMP + diphosphate + 2 H(+). The protein operates within purine metabolism; GMP biosynthesis; GMP from XMP (L-Gln route): step 1/1. Functionally, catalyzes the synthesis of GMP from XMP. The sequence is that of GMP synthase [glutamine-hydrolyzing] from Salinibacter ruber (strain DSM 13855 / M31).